A 329-amino-acid chain; its full sequence is Tryptophan--tRNA ligase (329 aa).

ATP contacts are provided by residues 9 to 11 (QPS) and 17 to 18 (GN). Residues 10–18 (PSGIPTIGN) carry the 'HIGH' region motif. Aspartate 133 contributes to the L-tryptophan binding site. ATP is bound by residues 145-147 (GDD), valine 184, and 193-197 (KMSKS). The 'KMSKS' region signature appears at 193–197 (KMSKS).

Belongs to the class-I aminoacyl-tRNA synthetase family. In terms of assembly, homodimer.

It is found in the cytoplasm. The catalysed reaction is tRNA(Trp) + L-tryptophan + ATP = L-tryptophyl-tRNA(Trp) + AMP + diphosphate + H(+). Its function is as follows. Catalyzes the attachment of tryptophan to tRNA(Trp). The sequence is that of Tryptophan--tRNA ligase from Staphylococcus aureus (strain MRSA252).